A 209-amino-acid chain; its full sequence is Outer-membrane lipoprotein carrier protein (209 aa).

Positions 1-21 (MHRQLRYAVLATALFASTAFA) are cleaved as a signal peptide.

This sequence belongs to the LolA family. Monomer.

Its subcellular location is the periplasm. Participates in the translocation of lipoproteins from the inner membrane to the outer membrane. Only forms a complex with a lipoprotein if the residue after the N-terminal Cys is not an aspartate (The Asp acts as a targeting signal to indicate that the lipoprotein should stay in the inner membrane). This is Outer-membrane lipoprotein carrier protein from Xanthomonas campestris pv. campestris (strain 8004).